The following is a 35-amino-acid chain: Photosystem II reaction center protein T (35 aa).

Residues 3-23 form a helical membrane-spanning segment; it reads AFAYTLLMTLVVATLFFAVAF.

Belongs to the PsbT family. As to quaternary structure, PSII is composed of 1 copy each of membrane proteins PsbA, PsbB, PsbC, PsbD, PsbE, PsbF, PsbH, PsbI, PsbJ, PsbK, PsbL, PsbM, PsbT, PsbX, PsbY, Psb30/Ycf12, peripheral proteins PsbO, CyanoQ (PsbQ), PsbU, PsbV and a large number of cofactors. It forms dimeric complexes.

Its subcellular location is the cellular thylakoid membrane. Functionally, found at the monomer-monomer interface of the photosystem II (PS II) dimer, plays a role in assembly and dimerization of PSII. PSII is a light-driven water plastoquinone oxidoreductase, using light energy to abstract electrons from H(2)O, generating a proton gradient subsequently used for ATP formation. In Prochlorococcus marinus (strain MIT 9303), this protein is Photosystem II reaction center protein T.